The following is a 462-amino-acid chain: Coagulation factor IX (462 aa).

Residues 1–21 (MADAPGLIPIFLLGYLLSTEC) form the signal peptide. Residues 22-39 (AVFLDRENATKILTRPKR) constitute a propeptide that is removed on maturation. Residues Y40, N41, E46, E47, E54, E56, E59, E60, E65, E66, and E69 each coordinate Ca(2+). Residues 40-86 (YNSGKLEEFVQGNLERECIEERCSFEEAREVFENTEKTTEFWKQYVD) form the Gla domain. 4-carboxyglutamate is present on residues E46, E47, E54, E56, E59, E60, E65, E66, E69, E72, and E75. Position 54 (E54) interacts with Mg(2+). C57 and C62 are oxidised to a cystine. E59 is a binding site for Mg(2+). E65 lines the Mg(2+) pocket. A Mg(2+)-binding site is contributed by E69. E75 contacts Ca(2+). E75 is a binding site for Mg(2+). The O-linked (GalNAc...) threonine glycan is linked to T78. Residues E79, D86, G87, and Q89 each coordinate Ca(2+). E79 carries the post-translational modification 4-carboxyglutamate. E79 contacts Mg(2+). Residues 86–122 (DGDQCESNPCLNGGICKDDINSYECWCQAGFEGRNCE) enclose the EGF-like; calcium-binding domain. 10 disulfides stabilise this stretch: C90-C101, C95-C110, C112-C121, C127-C138, C134-C148, C150-C163, C171-C336, C253-C269, C383-C397, and C408-C436. The O-linked (Glc...) serine glycan is linked to S92. 2 residues coordinate Ca(2+): D103 and D104. (3R)-3-hydroxyaspartate is present on D103. At S107 the chain carries Phosphoserine. Positions 186–227 (AETVFSNTDYGNSTELILDDITNSTILDNLTENSEPINDFTR) are cleaved as a propeptide — activation peptide. Y195 carries the sulfotyrosine modification. S198 is modified (phosphoserine). The residue at position 199 (T199) is a Phosphothreonine; alternate. T199 is a glycosylation site (O-linked (GalNAc...) threonine; alternate). N208 and N214 each carry an N-linked (GlcNAc...) asparagine glycan. 2 O-linked (GalNAc...) threonine glycosylation sites follow: T216 and T226. The Peptidase S1 domain maps to 228–460 (VVGGENAKPG…YVNWIKEKTK (233 aa)). The active-site Charge relay system is H268. Residues E282, N284, E287, E289, and E292 each coordinate Ca(2+). The N-linked (GlcNAc...) asparagine glycan is linked to N307. D316 acts as the Charge relay system in catalysis. Residue S412 is the Charge relay system of the active site.

This sequence belongs to the peptidase S1 family. As to quaternary structure, heterodimer of a light chain and a heavy chain; disulfide-linked. Interacts (inactive and activated) with F11 (activated) in calcium-dependent manner. Interacts with SERPINC1. Interacts (inactive and activated) with nitrophorin-2, an anticoagulant protein from Rhodnius prolixus. Activated by factor XIa, which excises the activation peptide. The propeptide can also be removed by snake venom protease. Activated by coagulation factor VIIa-tissue factor (F7-F3) complex in calcium-dependent manner. In terms of processing, the iron and 2-oxoglutarate dependent 3-hydroxylation of aspartate and asparagine is (R) stereospecific within EGF domains. Post-translationally, predominantly O-glucosylated at Ser-92 by POGLUT1 in vitro.

The protein localises to the secreted. The catalysed reaction is Selective cleavage of Arg-|-Ile bond in factor X to form factor Xa.. In terms of biological role, factor IX is a vitamin K-dependent plasma protein that participates in the intrinsic pathway of blood coagulation by converting factor X to its active form in the presence of Ca(2+) ions, phospholipids, and factor VIIIa. This Rattus norvegicus (Rat) protein is Coagulation factor IX (F9).